The primary structure comprises 301 residues: Glycine--tRNA ligase alpha subunit (301 aa).

The protein belongs to the class-II aminoacyl-tRNA synthetase family. In terms of assembly, tetramer of two alpha and two beta subunits.

The protein resides in the cytoplasm. It carries out the reaction tRNA(Gly) + glycine + ATP = glycyl-tRNA(Gly) + AMP + diphosphate. The sequence is that of Glycine--tRNA ligase alpha subunit from Shewanella frigidimarina (strain NCIMB 400).